The primary structure comprises 772 residues: A type blood N-acetyl-alpha-D-galactosamine deacetylase (772 aa).

The first 27 residues, 1 to 27 (MRNRRKAVSLLTGLLVTAQLFPTAALA), serve as a signal peptide directing secretion. Substrate contacts are provided by Ser-87 and His-123. A divalent metal cation is bound at residue Asp-126. The segment at 180-402 (WSKPTSDAER…WRIGYAENSF (223 aa)) is deacetylase activity. A substrate-binding site is contributed by Tyr-236. His-278 serves as a coordination point for a divalent metal cation. The F5/8 type C domain maps to 494 to 605 (SDDLEIAVVE…KDLVASGSDW (112 aa)). Residues 502–765 (VENPYTLIPQ…VCVSPVVDFD (264 aa)) form a CBM32 carbohydrate-binding domain region. The interval 515 to 772 (TATATSVYGG…DFDYFSYVGE (258 aa)) is not required for activity on soluble substrates.

The cofactor is a divalent metal cation.

The enzyme catalyses an N-acetyl-alpha-D-galactosaminyl-(1-&gt;3)-[alpha-L-fucosyl-(1-&gt;2)]-beta-D-galactosyl derivative + H2O = an alpha-D-galactosaminyl-(1-&gt;3)-[alpha-L-fucosyl-(1-&gt;2)]-beta-D-galactosyl derivative + acetate. With respect to regulation, inhibited by EDTA. Its function is as follows. One of an enzyme pair that work together to convert the A antigen to the H antigen of the O blood type, which together release galactosamine. Catalyzes the first step in the conversion, generating the substrate for the subsequent enzyme (FpGalNase, AC P0DTR5). Works on many different A antigen subtypes. Glu-90 probably activates a nucleophilic water molecule to start the deacetylation reaction. The sequence is that of A type blood N-acetyl-alpha-D-galactosamine deacetylase from Flavonifractor plautii (Fusobacterium plautii).